A 96-amino-acid polypeptide reads, in one-letter code: Co-chaperonin GroES (96 aa).

This sequence belongs to the GroES chaperonin family. As to quaternary structure, heptamer of 7 subunits arranged in a ring. Interacts with the chaperonin GroEL.

The protein localises to the cytoplasm. In terms of biological role, together with the chaperonin GroEL, plays an essential role in assisting protein folding. The GroEL-GroES system forms a nano-cage that allows encapsulation of the non-native substrate proteins and provides a physical environment optimized to promote and accelerate protein folding. GroES binds to the apical surface of the GroEL ring, thereby capping the opening of the GroEL channel. The chain is Co-chaperonin GroES from Geotalea uraniireducens (strain Rf4) (Geobacter uraniireducens).